The sequence spans 173 residues: Gamma-crystallin S-1 (173 aa).

2 Beta/gamma crystallin 'Greek key' domains span residues 2 to 40 (GKII…RVES) and 41 to 83 (DWWV…RMLP). The interval 84-88 (HTGRS) is connecting peptide. 2 Beta/gamma crystallin 'Greek key' domains span residues 89–129 (YRMR…QVMD) and 130–172 (GYWI…RRIM).

It belongs to the beta/gamma-crystallin family.

Functionally, crystallins are the dominant structural components of the vertebrate eye lens. In Chiloscyllium indicum (Slender bamboo shark), this protein is Gamma-crystallin S-1 (GS-1).